Here is a 115-residue protein sequence, read N- to C-terminus: Large ribosomal subunit protein bL19 (115 aa).

It belongs to the bacterial ribosomal protein bL19 family.

Its function is as follows. This protein is located at the 30S-50S ribosomal subunit interface and may play a role in the structure and function of the aminoacyl-tRNA binding site. The chain is Large ribosomal subunit protein bL19 from Lawsonia intracellularis (strain PHE/MN1-00).